We begin with the raw amino-acid sequence, 134 residues long: Secretin (134 aa).

Positions 1–21 are cleaved as a signal peptide; it reads MATRALLLLLLLPPLLLLAGC. The propeptide occupies 22–31; the sequence is AARPAPPRAP. Valine 59 is subject to Valine amide. Serine 63 carries the post-translational modification Phosphoserine. A propeptide spanning residues 63–134 is cleaved from the precursor; the sequence is SQQDPENNTA…PAAEGSPMPP (72 aa).

Belongs to the glucagon family.

The protein resides in the secreted. Hormone involved in different processes, such as regulation of the pH of the duodenal content, food intake and water homeostasis. Exerts its biological effects by binding to secretin receptor (SCTR), a G-protein coupled receptor expressed in the basolateral domain of several cells. Acts as a key gastrointestinal hormone by regulating the pH of the duodenal content. Secreted by S cells of the duodenum in the crypts of Lieberkuehn and regulates the pH of the duodenum by (1) inhibiting the secretion of gastric acid from the parietal cells of the stomach and (2) stimulating the production of bicarbonate (NaHCO(3)) from the ductal cells of the pancreas. Production of bicarbonate is essential to neutralize the pH and ensure no damage is done to the small intestine by the gastric acid. In addition to regulating the pH of the duodenal content, plays a central role in diet induced thermogenesis: acts as a non-sympathetic brown fat (BAT) activator mediating prandial thermogenesis, which consequentially induces satiation. Mechanistically, secretin released by the gut after a meal binds to secretin receptor (SCTR) in brown adipocytes, activating brown fat thermogenesis by stimulating lipolysis, which is sensed in the brain and promotes satiation. Also able to stimulate lipolysis in white adipocytes. Also plays an important role in cellular osmoregulation: released into the systemic circulation in response to hyperosmolality and acts at different levels in the hypothalamus, pituitary and kidney to regulate water homeostasis. Also plays a role in the central nervous system, possibly by acting as a neuropeptide hormone: required for hippocampal synaptic function and neural progenitor cells maintenance. In Sus scrofa (Pig), this protein is Secretin.